The sequence spans 75 residues: F1845 fimbrial adhesin operon regulatory protein DaaF (75 aa).

Its function is as follows. May have a possible regulatory function on the expression of the other daa genes. This Escherichia coli protein is F1845 fimbrial adhesin operon regulatory protein DaaF (daaF).